A 144-amino-acid chain; its full sequence is Putative low molecular weight protein-tyrosine-phosphatase (144 aa).

The active-site Nucleophile is cysteine 9. Arginine 15 is a catalytic residue. Aspartate 115 functions as the Proton donor in the catalytic mechanism.

This sequence belongs to the low molecular weight phosphotyrosine protein phosphatase family.

It carries out the reaction O-phospho-L-tyrosyl-[protein] + H2O = L-tyrosyl-[protein] + phosphate. The chain is Putative low molecular weight protein-tyrosine-phosphatase from Klebsiella pneumoniae.